A 364-amino-acid polypeptide reads, in one-letter code: MSRAARATVNLSALRANLRTARAAAPQQRIMAVIKSDGYGHGLAVVAGALTGHAEAFAVTDADEAEALRAAGFRERIVLLQGPFAVDDLARAAAADLELVIHAHWQVEALAQAQLASPVTVWLKVDSGMHRLGFPPEEVQDAWRRLTEASCVRADIGFLTHLACADDRDDPATERQLETFQAACDGLPGPRSAANSAGVLGWPASHYDWVRPGIMLYGASPFVDGRDEQPALQPAMAFQGRVVAVRHLRAGDPVGYGATWSCPEAMPVGVVSIGYGDGYPRHAPSGTPVEVAGQRTRLVGRISMDMLAVDLRGLDPVAEGDPAILWGGAVRAEEVAGACGTIAYELFCRMPPRVRREPVDGETL.

Residue Lys35 is the Proton acceptor; specific for D-alanine of the active site. Lys35 bears the N6-(pyridoxal phosphate)lysine mark. Arg131 is a binding site for substrate. Residue Tyr256 is the Proton acceptor; specific for L-alanine of the active site. Residue Met304 participates in substrate binding.

This sequence belongs to the alanine racemase family. Requires pyridoxal 5'-phosphate as cofactor.

It catalyses the reaction L-alanine = D-alanine. Its pathway is amino-acid biosynthesis; D-alanine biosynthesis; D-alanine from L-alanine: step 1/1. In terms of biological role, catalyzes the interconversion of L-alanine and D-alanine. May also act on other amino acids. This chain is Alanine racemase (alr), found in Halorhodospira halophila (strain DSM 244 / SL1) (Ectothiorhodospira halophila (strain DSM 244 / SL1)).